The sequence spans 380 residues: MSKDSSLHPKYQMASNIPRETSFLVPKEPTRYLPFQMCQSPLVTPTRPLQSSHSVHERDLHQKDSQEPSRNSGSMPLSDKYYNKQSGPVATRKCRKERTVYSKEQKCLLQEHFHQCQNPDLEQRKALALLIGVTEYKIQTWFKNRRAKECRKSSQLPRRIGSGPHYRPTSSSGGEVPDFAASPDSVCQRHVNVSYPPEFRPSRNSPHQEFNSSLIDQPLEDMCFSKSHIISEHPRQKCRELSREPGHLSSDRSGCSNVLSSPSPAAGAESSCDIPSGLSLSPQLGPPSMTQNSESTFSMCQTPSVLSPLPELSPLSNSLDQMAIFSKIDQVCEIYQKNTRSKKQRKETEKNTVQNLMHGQDSCEITESPKGTVSLPSSAY.

Disordered regions lie at residues 1–25 (MSKD…SFLV), 43–95 (VTPT…RKCR), 152–182 (KSSQ…FAAS), 234–303 (PRQK…CQTP), and 339–380 (TRSK…SSAY). Residues 43-53 (VTPTRPLQSSH) are compositionally biased toward polar residues. The span at 54–67 (SVHERDLHQKDSQE) shows a compositional bias: basic and acidic residues. The segment at residues 94 to 153 (CRKERTVYSKEQKCLLQEHFHQCQNPDLEQRKALALLIGVTEYKIQTWFKNRRAKECRKS) is a DNA-binding region (homeobox). Residues 234–250 (PRQKCRELSREPGHLSS) show a composition bias toward basic and acidic residues. Residues 260–271 (SSPSPAAGAESS) are compositionally biased toward low complexity. Composition is skewed to polar residues over residues 278 to 302 (LSLS…MCQT) and 351 to 380 (NTVQ…SSAY).

This sequence belongs to the paired homeobox family. Obox subfamily. As to expression, specifically expressed in early embryos.

Its subcellular location is the nucleus. Functionally, transcription factor required for zygotic genome activation (ZGA), a critical event in early embryonic development during which the developmental control passes from maternally provided mRNAs to the expression of the zygotic genome after fertilization. Cannot compensate for loss of other members of the Obox family, suggesting that its function differs from other Obox family members. May regulate expression of histone genes in embryonic stem cells. Also involved in completion of meiosis of oocytes during the meiosis-I/meiosis-II transition. Required to maintain the nuclear membrane of the germinal vesicle in oocytes. This chain is Oocyte-specific homeobox protein 4, found in Mus musculus (Mouse).